The following is a 537-amino-acid chain: Tegument protein BRRF2 (537 aa).

Disordered stretches follow at residues 325-474 and 486-537; these read LALP…EAQD and GLRV…LSVI. Polar residues predominate over residues 334–347; that stretch reads KPQQTCSQLTSRGN. Low complexity predominate over residues 423 to 441; the sequence is SSQAAPSSSSVAPVASLSG. Acidic residues predominate over residues 492 to 517; that stretch reads DEDEDGSEDGEFSDLDLSDSDHEGDE.

It belongs to the lymphocryptovirus BRRF2 family.

The protein localises to the virion tegument. The polypeptide is Tegument protein BRRF2 (Homo sapiens (Human)).